The chain runs to 402 residues: MIKDIFFDQVKPAYGCTEPIAVALSTATAKKYLNETLEDLKEINITLDKNTYKNGLVVNIPGTNIFGLEIAAALGYLCGIPEKGLEVLKDVNSQCLSKATNLKNKIKIEINDMPYLYVETIAVSKDNHTVKILIEGKHDNIAKITIDSNTILDKPFNPSKTTLENIKKYSIDEIIDYVENPDKEVLDYVEKAIEMNIDIAKYGMQMKGNFSNAAINEYVKYVSAGVDARMSGVLKPVMTVAGSGNQGLSCILPIATKREEYDKEKILKATLLSILVTIYIKAYTGLLTPICGAGSISAAGSAAGLTYLKGGNRQQIKNAINDTIGTLFGLTCDGAKRGCALKAVTGTLTAIQVSELAINNIDVPCGNGIVAKDVEETIRRVGKLTNSVKQFDKDVLDYIGKC.

Belongs to the UPF0597 family.

The polypeptide is UPF0597 protein THA_1286 (Thermosipho africanus (strain TCF52B)).